The following is a 355-amino-acid chain: Protein pelota homolog (355 aa).

This sequence belongs to the eukaryotic release factor 1 family. Pelota subfamily. In terms of assembly, monomer. It depends on a divalent metal cation as a cofactor.

It is found in the cytoplasm. In terms of biological role, may function in recognizing stalled ribosomes, interact with stem-loop structures in stalled mRNA molecules, and effect endonucleolytic cleavage of the mRNA. May play a role in the release non-functional ribosomes and degradation of damaged mRNAs. Has endoribonuclease activity. The polypeptide is Protein pelota homolog (Natronomonas pharaonis (strain ATCC 35678 / DSM 2160 / CIP 103997 / JCM 8858 / NBRC 14720 / NCIMB 2260 / Gabara) (Halobacterium pharaonis)).